The sequence spans 462 residues: Glycerol-3-phosphate acyltransferase ATS12, chloroplastic (462 aa).

The transit peptide at 1 to 82 (MFILSSSSST…DKESAQSAAT (82 aa)) directs the protein to the chloroplast. Positions 233–238 (HQTEAD) match the HXXXXD motif motif.

The protein belongs to the GPAT/DAPAT family.

It is found in the plastid. The protein localises to the chloroplast stroma. It catalyses the reaction a fatty acyl-[ACP] + sn-glycerol 3-phosphate = a 1-acyl-sn-glycero-3-phosphate + holo-[ACP]. The catalysed reaction is sn-glycerol 3-phosphate + an acyl-CoA = a 1-acyl-sn-glycero-3-phosphate + CoA. It functions in the pathway phospholipid metabolism; CDP-diacylglycerol biosynthesis; CDP-diacylglycerol from sn-glycerol 3-phosphate: step 1/3. In terms of biological role, esterifies the acyl-group from acyl-acyl carrier proteins (acyl-ACPs) to the sn-1 position of glycerol-3-phosphate. The physiological acyl donors in chloroplasts are acyl-ACPs, but acyl-CoAs are used as artificial donor for in vitro reactions. The enzyme from chilling-resistant plants discriminates against non-fluid palmitic acid and selects oleic acid whereas the enzyme from sensitive plants accepts both fatty acids. Squash is chilling-sensitive. Does not seem to discriminate between the acyl-ACP thioesters 18:1-ACP, 18:0-ACP and 16:0-ACP. Exhibits higher selectivity for 16:0-CoA than 18:1-CoA in vitro. This is Glycerol-3-phosphate acyltransferase ATS12, chloroplastic from Cucurbita moschata (Winter crookneck squash).